A 69-amino-acid polypeptide reads, in one-letter code: UPF0437 protein AZC_3451 (69 aa).

This sequence belongs to the UPF0437 family.

The protein is UPF0437 protein AZC_3451 of Azorhizobium caulinodans (strain ATCC 43989 / DSM 5975 / JCM 20966 / LMG 6465 / NBRC 14845 / NCIMB 13405 / ORS 571).